We begin with the raw amino-acid sequence, 335 residues long: Fructose-1,6-bisphosphatase class 1 (335 aa).

Residues glutamate 93, aspartate 117, leucine 119, and aspartate 120 each contribute to the Mg(2+) site. Residues 120–123 (DGSS), asparagine 213, tyrosine 244, and lysine 274 contribute to the substrate site. Glutamate 280 contacts Mg(2+).

Belongs to the FBPase class 1 family. In terms of assembly, homotetramer. It depends on Mg(2+) as a cofactor.

It localises to the cytoplasm. It carries out the reaction beta-D-fructose 1,6-bisphosphate + H2O = beta-D-fructose 6-phosphate + phosphate. Its pathway is carbohydrate biosynthesis; gluconeogenesis. The protein is Fructose-1,6-bisphosphatase class 1 of Flavobacterium psychrophilum (strain ATCC 49511 / DSM 21280 / CIP 103535 / JIP02/86).